Reading from the N-terminus, the 173-residue chain is Inorganic pyrophosphatase (173 aa).

Substrate contacts are provided by Lys29, Arg43, and Tyr55. 3 residues coordinate Mg(2+): Asp65, Asp70, and Asp102. Substrate is bound at residue Tyr141.

This sequence belongs to the PPase family. In terms of assembly, homohexamer. Requires Mg(2+) as cofactor.

The protein localises to the cytoplasm. The enzyme catalyses diphosphate + H2O = 2 phosphate + H(+). In terms of biological role, catalyzes the hydrolysis of inorganic pyrophosphate (PPi) forming two phosphate ions. This Gluconobacter oxydans (strain 621H) (Gluconobacter suboxydans) protein is Inorganic pyrophosphatase.